The sequence spans 227 residues: Endo-1,4-beta-xylanase 11A (227 aa).

The N-terminal stretch at 1-36 is a signal peptide; that stretch reads MVSASSLLLAASAIAGVFSAPAAAPVSENLNVLQER. The GH11 domain occupies 37 to 227; the sequence is ALTSSATGTS…SSGSASITVS (191 aa). The necrosis inducing domain stretch occupies residues 112–136; it reads VYGWTTSPLIEYYIVEDFGTYDPSS. Catalysis depends on glutamate 122, which acts as the Nucleophile. Glutamate 214 (proton donor) is an active-site residue.

Belongs to the glycosyl hydrolase 11 (cellulase G) family.

It is found in the secreted. The enzyme catalyses Endohydrolysis of (1-&gt;4)-beta-D-xylosidic linkages in xylans.. It functions in the pathway glycan degradation; xylan degradation. Its activity is regulated as follows. Significantly inhibited by the wheat xylanase inhibiting protein I (XIP-I) and the proteinaceous endoxylanase Triticum aestivum xylanase inhibitors I (TAXI-I), whereas no inhibition is detected with TAXI-II. Endo-1,4-beta-xylanase involved in the hydrolysis of xylan, a major structural heterogeneous polysaccharide found in plant biomass representing the second most abundant polysaccharide in the biosphere, after cellulose. Required for plant infection and the appearance of secondary lesions. Is able to induce necrosis on leaves, seedling growth inhibition, induction of a ROS burst, electrolyte leakage, cytoplasm shrinkage, autofluorescence, cell death, and induction of defense genes, and this abilities are independent of the catalytic activity. Only exhibits elicitor activity in certain plants such as tomato, but not in N.benthamiana. The protein is Endo-1,4-beta-xylanase 11A of Botryotinia fuckeliana (strain B05.10) (Noble rot fungus).